The primary structure comprises 1936 residues: Trinucleotide repeat-containing gene 6C protein (1936 aa).

Over residues 1-31 the composition is skewed to basic and acidic residues; that stretch reads MEEKKKKKQEEKKKKEGAQKKAADQKTKVPE. Disordered regions lie at residues 1–160, 181–256, 366–412, 439–931, 961–1063, and 1115–1139; these read MEEK…PTYR, PSIT…NSNG, PQES…AMQT, NGSS…IRRK, VIQS…VAFG, and ESTS…KTSG. The span at 34–44 shows a compositional bias: polar residues; that stretch reads KTCSSQPQPAG. Positions 45–57 are enriched in low complexity; sequence TSTSTSTSTISSS. Polar residues predominate over residues 58 to 71; sequence NNGKRASASGQQPA. Residues 76-88 show a composition bias toward basic and acidic residues; the sequence is LPREVPPRFRQQE. 2 stretches are compositionally biased toward polar residues: residues 100–111 and 183–217; these read PTGTLTSVSPTQ and ITGT…GSAQ. A sufficient for interaction with argonaute family proteins region spans residues 211 to 1133; that stretch reads MATGSAQGNF…GNAPKKGLQK (923 aa). Positions 218–235 are enriched in low complexity; the sequence is GNFTGHTKKTNGNNGTNG. Polar residues predominate over residues 366–393; the sequence is PQESTEPQTSTSQNVSFSAQPQNLNTDG. Low complexity-rich tracts occupy residues 394–408, 439–453, and 469–480; these read PNNT…NPIN, NGSS…SAEG, and GNSNSGFSQGNG. Residues 481–498 are compositionally biased toward polar residues; that stretch reads DTVNSALSAKQNGSSSAV. The residue at position 523 (R523) is an Omega-N-methylarginine. Polar residues predominate over residues 572–585; that stretch reads GWESPSVTSQNPTV. The span at 594 to 614 shows a compositional bias: low complexity; that stretch reads SWAKAASSGTTASEGSSDGSG. Residues 625 to 636 are compositionally biased toward basic and acidic residues; it reads GTGEGRRRDKGI. A compositionally biased stretch (polar residues) spans 654-669; the sequence is LSNTGWGQTPVKQNTA. Basic and acidic residues predominate over residues 674–684; the sequence is ESPRSERKNDN. At S675 the chain carries Phosphoserine. Over residues 694–718 the composition is skewed to polar residues; sequence TQASNSGGKNDGSIMNSTNTSSVSG. Composition is skewed to low complexity over residues 720 to 730 and 750 to 772; these read VNAPPAAVPAN and SISS…SGAA. Composition is skewed to polar residues over residues 834 to 866 and 873 to 888; these read NRSG…TNWG and PQQN…NVSN. S924 is modified (phosphoserine). Low complexity predominate over residues 964–982; the sequence is SSTTTNTTTTTTTTTSNTT. The residue at position 987 (T987) is a Phosphothreonine. Over residues 1021–1035 the composition is skewed to polar residues; that stretch reads ENSWGEPSSPSTLVD. The UBA domain occupies 1140–1185; it reads KQDEAWIMSRLIKQLTDMGFPREPAEEALKSNNMNLDQAMSALLEK. Phosphoserine is present on S1218. 4 disordered regions span residues 1291 to 1312, 1419 to 1658, 1689 to 1732, and 1848 to 1869; these read AAQA…NSSQ, VKQP…PSSS, STWS…PSST, and TSSW…GSSH. The stretch at 1388–1419 forms a coiled coil; sequence MRQQEQQVARTITNLQQQIQQHQRQLAQALLV. The span at 1421–1430 shows a compositional bias: pro residues; the sequence is QPPPPPPPPH. Residues 1467-1936 form a silencing domain; interaction with CNOT1 and PAN3 region; it reads NTFAPYPLAG…PGDLLSGESL (470 aa). Residues 1496–1515 show a composition bias toward polar residues; the sequence is DPSQSQSRLPQWTHPNSMDN. The interval 1578 to 1624 is required for interaction with PABPC1; it reads KSDSDKISNGSSINWPPEFHPGVPWKGLQNIDPENDPDVTPGSVPTG. Residues 1578–1936 form a sufficient for translational repression when tethered to a target mRNA region; it reads KSDSDKISNG…PGDLLSGESL (359 aa). A PABPC1-interacting motif-2 (PAM2) region spans residues 1588–1606; that stretch reads SSINWPPEFHPGVPWKGLQ. The segment covering 1623 to 1633 has biased composition (polar residues); the sequence is TGPTINTTIQD. Positions 1641–1658 are enriched in low complexity; it reads SGGSSPPSSQNATLPSSS. Residues 1689–1703 are compositionally biased toward polar residues; sequence STWSSGPTSHTQASL. The RRM domain occupies 1811–1878; the sequence is AQKSLHMCVL…HGLVRSDAGH (68 aa). An interaction with the CCR4-NOT complex region spans residues 1842–1936; that stretch reads GQALPPTSSW…PGDLLSGESL (95 aa). Residues 1848–1865 are compositionally biased toward low complexity; the sequence is TSSWQSSSASSQPRLSAA.

It belongs to the GW182 family. As to quaternary structure, interacts with one or more of the argonaute family proteins AGO1, AGO2, AGO3 and AGO4. Interacts with PABPC1 and EIF4G1. Interacts with CNOT1; the interaction is direct and mediates the association with the CCR4-NOT complex. Interacts with PAN3; the interaction mediates the association with the PAN complex.

Its function is as follows. Plays a role in RNA-mediated gene silencing by micro-RNAs (miRNAs). Required for miRNA-dependent translational repression of complementary mRNAs by argonaute family proteins. As scaffoldng protein associates with argonaute proteins bound to partially complementary mRNAs and simultaneously can recruit CCR4-NOT and PAN deadenylase complexes. This Homo sapiens (Human) protein is Trinucleotide repeat-containing gene 6C protein (TNRC6C).